The chain runs to 366 residues: MGILEKIAEIEHEISRTQKNKATEYHLGLLKAKLAKYRQQLLEPTGKGGAKGEGFDVMKSGDARVAMVGFPSVGKSTLLSSMTSTHSEAAGYEFTTLTCIPGVISYNGANIQLLDLPGIIEGASQGKGRGRQVISVAKTADLILMMLDAGKSDQQKMLLERELEAVGIRLNKKPPNIYVKQKKVGGVKFTNTVPLTHCNEKLIMTVLHEYKIFNADVIFREDCTVDEFIDVIQGNRVYMTCLYVYNKVDQISIEEIDRLARMPHHVVISCEMNLNMDYLLEKMWEYLALVRVYTKKPGNAPDLGPEDGIILRGGATIEHCCHALHRSIAAQLRYAIVWGTSTKFSPQRVGLHHKLDHEDVIQIVKK.

The region spanning 63 to 288 (ARVAMVGFPS…LLEKMWEYLA (226 aa)) is the OBG-type G domain. GTP contacts are provided by residues 69–76 (GFPSVGKS), 115–119 (DLPGI), and 246–249 (NKVD). Positions 288–365 (ALVRVYTKKP…DHEDVIQIVK (78 aa)) constitute a TGS domain.

Belongs to the TRAFAC class OBG-HflX-like GTPase superfamily. OBG GTPase family.

This is an uncharacterized protein from Caenorhabditis elegans.